We begin with the raw amino-acid sequence, 356 residues long: sn-glycerol-3-phosphate import ATP-binding protein UgpC (356 aa).

In terms of domain architecture, ABC transporter spans 4–235 (LKLQAVTKSW…PASLFVASFI (232 aa)). 37–44 (GPSGCGKS) contributes to the ATP binding site.

The protein belongs to the ABC transporter superfamily. sn-glycerol-3-phosphate importer (TC 3.A.1.1.3) family. In terms of assembly, the complex is composed of two ATP-binding proteins (UgpC), two transmembrane proteins (UgpA and UgpE) and a solute-binding protein (UgpB).

It localises to the cell inner membrane. It catalyses the reaction sn-glycerol 3-phosphate(out) + ATP + H2O = sn-glycerol 3-phosphate(in) + ADP + phosphate + H(+). Part of the ABC transporter complex UgpBAEC involved in sn-glycerol-3-phosphate (G3P) import. Responsible for energy coupling to the transport system. The polypeptide is sn-glycerol-3-phosphate import ATP-binding protein UgpC (Escherichia coli O6:H1 (strain CFT073 / ATCC 700928 / UPEC)).